The chain runs to 68 residues: U2-agatoxin-Ao1u (68 aa).

An N-terminal signal peptide occupies residues 1–20 (MKAIISLLLISAMVFSMIEA). Positions 21–34 (VPLEEGLQLFEGER) are excised as a propeptide. 3 disulfide bridges follow: C36/C52, C43/C57, and C51/C67.

It belongs to the neurotoxin 01 (U2-agtx) family. As to expression, expressed by the venom gland.

It is found in the secreted. Insect active toxin causing rapid but reversible paralysis in crickets. No activity shown in mammals. Does not show effect on mammalian voltage-gated calcium channels. This chain is U2-agatoxin-Ao1u, found in Agelena orientalis (Funnel-web spider).